We begin with the raw amino-acid sequence, 328 residues long: MIERIWSGQSRLYLLLLPLSWLYGAVTWLIRASYRLGLRSAWRSPVPVIIVGNLTAGGNGKTPVVIWLVEQLQQRGYRVGVVSRGYGGKSAVYPLLLSDNTTTAQAGDEPVLIFQRTGAPVAVSPKRADAIKALLQSHAVDFIITDDGLQHYALQRDFELVVIDGVRRFGNGWWLPAGPMREREGRLRSVDAAITNGGLAAEGEIPMQLVAREAVNLVTGQRQPAEQLQHVVAMAGIGHPPRFFATLNLLGIKPENEHAFADHQDYSLAQLSRLTSGPQILLMTEKDAVKCRAFALPNWWYLPVDAQLPSDRADKLLLNIQALSPDTK.

An ATP-binding site is contributed by 55–62 (TAGGNGKT).

This sequence belongs to the LpxK family.

It carries out the reaction a lipid A disaccharide + ATP = a lipid IVA + ADP + H(+). It participates in glycolipid biosynthesis; lipid IV(A) biosynthesis; lipid IV(A) from (3R)-3-hydroxytetradecanoyl-[acyl-carrier-protein] and UDP-N-acetyl-alpha-D-glucosamine: step 6/6. Its function is as follows. Transfers the gamma-phosphate of ATP to the 4'-position of a tetraacyldisaccharide 1-phosphate intermediate (termed DS-1-P) to form tetraacyldisaccharide 1,4'-bis-phosphate (lipid IVA). The chain is Tetraacyldisaccharide 4'-kinase from Yersinia pseudotuberculosis serotype I (strain IP32953).